A 483-amino-acid chain; its full sequence is ATP synthase subunit beta (483 aa).

169 to 176 contributes to the ATP binding site; that stretch reads GGAGVGKT.

Belongs to the ATPase alpha/beta chains family. In terms of assembly, F-type ATPases have 2 components, CF(1) - the catalytic core - and CF(0) - the membrane proton channel. CF(1) has five subunits: alpha(3), beta(3), gamma(1), delta(1), epsilon(1). CF(0) has three main subunits: a(1), b(2) and c(9-12). The alpha and beta chains form an alternating ring which encloses part of the gamma chain. CF(1) is attached to CF(0) by a central stalk formed by the gamma and epsilon chains, while a peripheral stalk is formed by the delta and b chains.

The protein resides in the cell membrane. The catalysed reaction is ATP + H2O + 4 H(+)(in) = ADP + phosphate + 5 H(+)(out). Produces ATP from ADP in the presence of a proton gradient across the membrane. The catalytic sites are hosted primarily by the beta subunits. This Rhodococcus erythropolis (strain PR4 / NBRC 100887) protein is ATP synthase subunit beta.